The following is a 148-amino-acid chain: Ponticulin-like protein D (148 aa).

A signal peptide spans 1 to 20 (MLLNKSLLLLVAFVFAIVSA). Residue asparagine 67 is glycosylated (N-linked (GlcNAc...) asparagine). A lipid anchor (GPI-like-anchor amidated aspartate) is attached at aspartate 125. The propeptide at 126-148 (SSAAATMIASFSAILIALLFALL) is removed in mature form.

This sequence belongs to the ponticulin family. The GPI-like-anchor contains a phosphoceramide group, rather than a phosphatidyl group.

It is found in the cell membrane. This chain is Ponticulin-like protein D (ponD), found in Dictyostelium discoideum (Social amoeba).